A 901-amino-acid polypeptide reads, in one-letter code: Schlafen family member 11 (901 aa).

Mg(2+)-binding residues include glutamate 209 and glutamate 214. Lysine 216 is an active-site residue. Zn(2+)-binding residues include histidine 285, cysteine 287, cysteine 321, and cysteine 322. Residue 599–606 coordinates ATP; it reads GLPGSGKT.

This sequence belongs to the Schlafen family. Subgroup III subfamily. Homodimer. Interacts with MCM3. Interacts with DHX9. Interacts with RPA1. Mg(2+) is required as a cofactor. Exhibits a wider expression range in ovarian and colon adenocarcinoma than in their corresponding healthy tissues.

The protein resides in the nucleus. The protein localises to the chromosome. Functionally, inhibitor of DNA replication that promotes cell death in response to DNA damage. Acts as a guardian of the genome by killing cells with defective replication. Persistently blocks stressed replication forks by opening chromatin across replication initiation sites at stressed replication forks, possibly leading to unwind DNA ahead of the MCM helicase and block fork progression, ultimately leading to cell death. Upon DNA damage, inhibits translation of ATR or ATM based on distinct codon usage without disrupting early DNA damage response signaling. Antiviral restriction factor with manganese-dependent type II tRNA endoribonuclease. A single tRNA molecule is bound and cleaved by the SLFN11 dimer. Specifically abrogates the production of retroviruses such as human immunodeficiency virus 1 (HIV-1) by acting as a specific inhibitor of the synthesis of retroviruses encoded proteins in a codon-usage-dependent manner. Impairs the replication of human cytomegalovirus (HCMV) and some Flaviviruses. Exploits the unique viral codon bias towards A/T nucleotides. Also acts as an interferon (IFN)-induced antiviral protein which acts as an inhibitor of retrovirus protein synthesis. The polypeptide is Schlafen family member 11 (Homo sapiens (Human)).